We begin with the raw amino-acid sequence, 912 residues long: Probable dipeptidyl-aminopeptidase B (912 aa).

The segment covering 1-25 has biased composition (basic and acidic residues); it reads MAAEKGESSDEERKPLTRDSMEYRD. 2 disordered regions span residues 1 to 31 and 49 to 70; these read MAAE…NSLH and GSTH…SDDG. At 1 to 92 the chain is on the cytoplasmic side; the sequence is MAAEKGESSD…GGKPVQKKVK (92 aa). The chain crosses the membrane as a helical; Signal-anchor for type II membrane protein span at residues 93-113; it reads IVLGFLLFLCLSGWSLSFVLF. Residues 114–912 lie on the Vacuolar side of the membrane; it reads LFGGHESSKT…RAAIWVGLSI (799 aa). N130, N210, N346, N569, and N656 each carry an N-linked (GlcNAc...) asparagine glycan. Catalysis depends on S751, which acts as the Charge relay system. N-linked (GlcNAc...) asparagine glycosylation occurs at N810. Active-site charge relay system residues include D828 and H861. Residue N897 is glycosylated (N-linked (GlcNAc...) asparagine).

The protein belongs to the peptidase S9B family.

It is found in the vacuole membrane. It carries out the reaction Release of an N-terminal dipeptide, Xaa-Yaa-|-Zaa-, from a polypeptide, preferentially when Yaa is Pro, provided Zaa is neither Pro nor hydroxyproline.. Type IV dipeptidyl-peptidase which removes N-terminal dipeptides sequentially from polypeptides having unsubstituted N-termini provided that the penultimate residue is proline. This chain is Probable dipeptidyl-aminopeptidase B (DAPB), found in Paracoccidioides lutzii (strain ATCC MYA-826 / Pb01) (Paracoccidioides brasiliensis).